The primary structure comprises 142 residues: Large ribosomal subunit protein uL22c (142 aa).

This sequence belongs to the universal ribosomal protein uL22 family. In terms of assembly, part of the 50S ribosomal subunit.

The protein localises to the plastid. It is found in the chloroplast. This protein binds specifically to 23S rRNA. Its function is as follows. The globular domain of the protein is located near the polypeptide exit tunnel on the outside of the subunit, while an extended beta-hairpin is found that lines the wall of the exit tunnel in the center of the 70S ribosome. In Pinus koraiensis (Korean pine), this protein is Large ribosomal subunit protein uL22c (rpl22).